The sequence spans 684 residues: Zinc finger BED domain-containing protein RICESLEEPER 4 (684 aa).

A BED-type zinc finger spans residues 54–113 (KRKSAIWEHFTLVDVSDGCKRASCIHCNQSLAYSSGSKNSGTSHLTRHIAEWCRVLKDRQ). Cysteine 77, cysteine 80, histidine 101, and cysteine 106 together coordinate Zn(2+). The segment at 595–680 (ELELYLEEAL…EALLCAKDWL (86 aa)) is HATC (Hobo-Ac-Tam3) domain.

Homodimer.

It localises to the nucleus. Transposase-like protein that is essential for plant growth and development. May regulate global gene expression by recruiting other cellular factors. This chain is Zinc finger BED domain-containing protein RICESLEEPER 4, found in Oryza sativa subsp. japonica (Rice).